Here is a 271-residue protein sequence, read N- to C-terminus: Tetraspanin-11 (271 aa).

The Cytoplasmic segment spans residues Met1–Phe7. The chain crosses the membrane as a helical span at residues Met8–Ile28. Over Tyr29–Arg44 the chain is Extracellular. A helical membrane pass occupies residues Ile45–Ser65. Over Cys66–Tyr76 the chain is Cytoplasmic. Residues Leu77–Val97 form a helical membrane-spanning segment. The Extracellular portion of the chain corresponds to Thr98–Asn236. Asn185 and Asn195 each carry an N-linked (GlcNAc...) asparagine glycan. The chain crosses the membrane as a helical span at residues Leu237–Cys257. Residues Ala258–Val271 lie on the Cytoplasmic side of the membrane.

This sequence belongs to the tetraspanin (TM4SF) family.

The protein localises to the membrane. Functionally, may be involved in the regulation of cell differentiation. The polypeptide is Tetraspanin-11 (TET11) (Arabidopsis thaliana (Mouse-ear cress)).